The chain runs to 356 residues: Histidinol-phosphate aminotransferase (356 aa).

Residue Lys-214 is modified to N6-(pyridoxal phosphate)lysine.

It belongs to the class-II pyridoxal-phosphate-dependent aminotransferase family. Histidinol-phosphate aminotransferase subfamily. Homodimer. The cofactor is pyridoxal 5'-phosphate.

It carries out the reaction L-histidinol phosphate + 2-oxoglutarate = 3-(imidazol-4-yl)-2-oxopropyl phosphate + L-glutamate. It participates in amino-acid biosynthesis; L-histidine biosynthesis; L-histidine from 5-phospho-alpha-D-ribose 1-diphosphate: step 7/9. The chain is Histidinol-phosphate aminotransferase from Escherichia coli O8 (strain IAI1).